Here is a 102-residue protein sequence, read N- to C-terminus: Large ribosomal subunit protein bL21 (102 aa).

This sequence belongs to the bacterial ribosomal protein bL21 family. As to quaternary structure, part of the 50S ribosomal subunit. Contacts protein L20.

Its function is as follows. This protein binds to 23S rRNA in the presence of protein L20. In Trichlorobacter lovleyi (strain ATCC BAA-1151 / DSM 17278 / SZ) (Geobacter lovleyi), this protein is Large ribosomal subunit protein bL21.